The following is a 138-amino-acid chain: Protein transport protein got1 homolog (138 aa).

Over 1–7 (MFTDQQK) the chain is Cytoplasmic. The chain crosses the membrane as a helical span at residues 8–28 (IGAMLSAMGLFFGFLGVLLFL). At 29 to 30 (DR) the chain is on the lumenal side. The chain crosses the membrane as a helical span at residues 31–51 (NLLALGNLLLVSGIVLILGLQ). Over 52–62 (KTTKFFAQKKK) the chain is Cytoplasmic. A helical membrane pass occupies residues 63-82 (IKGTILFFFGIVVLLVTRWT). The Lumenal segment spans residues 83-87 (FVGMV). Residues 88–108 (IEIFGFVNLFGDAFPIVISIL) traverse the membrane as a helical segment. Topologically, residues 109 to 138 (RKLPIIGNILNHPLVNRLLQKADSGNELPF) are cytoplasmic.

The protein belongs to the GOT1 family.

Its subcellular location is the golgi apparatus membrane. In terms of biological role, may be involved in fusion of ER-derived transport vesicles with the Golgi complex. The protein is Protein transport protein got1 homolog (golt1) of Dictyostelium discoideum (Social amoeba).